Reading from the N-terminus, the 101-residue chain is Large ribosomal subunit protein uL23 (101 aa).

Belongs to the universal ribosomal protein uL23 family. As to quaternary structure, part of the 50S ribosomal subunit. Contacts protein L29, and trigger factor when it is bound to the ribosome.

One of the early assembly proteins it binds 23S rRNA. One of the proteins that surrounds the polypeptide exit tunnel on the outside of the ribosome. Forms the main docking site for trigger factor binding to the ribosome. The sequence is that of Large ribosomal subunit protein uL23 from Rhodococcus erythropolis (strain PR4 / NBRC 100887).